The chain runs to 846 residues: Choline trimethylamine-lyase (846 aa).

The region spanning 60-718 (PRHVKLKENF…LLGASANGRR (659 aa)) is the PFL domain. The active-site Cysteine radical intermediate is cysteine 489. Glutamate 491 functions as the Proton acceptor in the catalytic mechanism. Residues 725–846 (DGISPTQGAD…IISRTMLHGF (122 aa)) enclose the Glycine radical domain. Glycine 821 bears the Glycine radical mark.

It belongs to the glycyl radical enzyme (GRE) family. CutC subfamily. Homodimer. In terms of processing, requires the activating protein CutD to generate the key active site glycyl radical on Gly-821 that is involved in catalysis.

The catalysed reaction is choline = trimethylamine + acetaldehyde. Its pathway is amine and polyamine metabolism; choline degradation. Functionally, glycine radical enzyme that catalyzes the cleavage of a C-N bond in choline, producing trimethylamine (TMA) and acetaldehyde. Is involved in the anaerobic choline utilization pathway that allows D.alaskensis to grow on choline as a source of carbon and energy. Is strictly specific for choline as substrate. This is Choline trimethylamine-lyase from Oleidesulfovibrio alaskensis (strain ATCC BAA-1058 / DSM 17464 / G20) (Desulfovibrio alaskensis).